The following is a 96-amino-acid chain: (4S)-4-hydroxy-5-phosphonooxypentane-2,3-dione isomerase (96 aa).

Residues 2–91 enclose the ABM domain; sequence HVTLVEINVK…MTGPRKKTTF (90 aa).

The protein belongs to the LsrG family. As to quaternary structure, homodimer.

The protein localises to the cytoplasm. It carries out the reaction (2S)-2-hydroxy-3,4-dioxopentyl phosphate = 3-hydroxy-2,4-dioxopentyl phosphate. Its function is as follows. Involved in the degradation of phospho-AI-2, thereby terminating induction of the lsr operon and closing the AI-2 signaling cycle. Catalyzes the conversion of (4S)-4-hydroxy-5-phosphonooxypentane-2,3-dione (P-DPD) to 3-hydroxy-5-phosphonooxypentane-2,4-dione (P-HPD). This is (4S)-4-hydroxy-5-phosphonooxypentane-2,3-dione isomerase from Yersinia enterocolitica serotype O:8 / biotype 1B (strain NCTC 13174 / 8081).